Reading from the N-terminus, the 197-residue chain is NADH-quinone oxidoreductase subunit C (197 aa).

This sequence belongs to the complex I 30 kDa subunit family. In terms of assembly, NDH-1 is composed of 14 different subunits. Subunits NuoB, C, D, E, F, and G constitute the peripheral sector of the complex.

It localises to the cell inner membrane. The catalysed reaction is a quinone + NADH + 5 H(+)(in) = a quinol + NAD(+) + 4 H(+)(out). In terms of biological role, NDH-1 shuttles electrons from NADH, via FMN and iron-sulfur (Fe-S) centers, to quinones in the respiratory chain. The immediate electron acceptor for the enzyme in this species is believed to be ubiquinone. Couples the redox reaction to proton translocation (for every two electrons transferred, four hydrogen ions are translocated across the cytoplasmic membrane), and thus conserves the redox energy in a proton gradient. The protein is NADH-quinone oxidoreductase subunit C of Rickettsia typhi (strain ATCC VR-144 / Wilmington).